The following is a 385-amino-acid chain: Outer membrane protein assembly factor BamB (385 aa).

The N-terminal stretch at M1 to G20 is a signal peptide. C21 is lipidated: N-palmitoyl cysteine. The S-diacylglycerol cysteine moiety is linked to residue C21.

The protein belongs to the BamB family. Part of the Bam complex.

Its subcellular location is the cell outer membrane. Its function is as follows. Part of the outer membrane protein assembly complex, which is involved in assembly and insertion of beta-barrel proteins into the outer membrane. This chain is Outer membrane protein assembly factor BamB, found in Aliivibrio fischeri (strain ATCC 700601 / ES114) (Vibrio fischeri).